Reading from the N-terminus, the 58-residue chain is Small ribosomal subunit protein bS21 (58 aa).

Residues 34–58 (KREHYEKPSVKRKKKSEAARKRKFK) form a disordered region. The span at 43-58 (VKRKKKSEAARKRKFK) shows a compositional bias: basic residues.

Belongs to the bacterial ribosomal protein bS21 family.

The polypeptide is Small ribosomal subunit protein bS21 (Clostridium acetobutylicum (strain ATCC 824 / DSM 792 / JCM 1419 / IAM 19013 / LMG 5710 / NBRC 13948 / NRRL B-527 / VKM B-1787 / 2291 / W)).